We begin with the raw amino-acid sequence, 318 residues long: L-lactate dehydrogenase (318 aa).

NAD(+)-binding positions include V20, D41, K46, Y71, and 85 to 86; that span reads GA. Residues Q88, R94, and 126–129 contribute to the substrate site; that span reads NPVD. NAD(+)-binding positions include 124-126 and S149; that span reads ATN. 154-157 lines the substrate pocket; it reads DTAR. Positions 159 and 174 each coordinate beta-D-fructose 1,6-bisphosphate. The Proton acceptor role is filled by H181. Residue Y226 is modified to Phosphotyrosine. T235 provides a ligand contact to substrate.

The protein belongs to the LDH/MDH superfamily. LDH family. As to quaternary structure, homotetramer.

Its subcellular location is the cytoplasm. The enzyme catalyses (S)-lactate + NAD(+) = pyruvate + NADH + H(+). The protein operates within fermentation; pyruvate fermentation to lactate; (S)-lactate from pyruvate: step 1/1. With respect to regulation, allosterically activated by fructose 1,6-bisphosphate (FBP). Its function is as follows. Catalyzes the conversion of lactate to pyruvate. This chain is L-lactate dehydrogenase, found in Priestia megaterium (Bacillus megaterium).